The sequence spans 69 residues: U2-agatoxin-Ao1g (69 aa).

A signal peptide spans 1–20; it reads MKAIISLLLISAMVFSMIEA. Positions 21–34 are excised as a propeptide; that stretch reads VPVEEGLQLFEGER. 3 disulfide bridges follow: Cys36–Cys52, Cys43–Cys57, and Cys51–Cys67. Leu68 carries the post-translational modification Leucine amide.

It belongs to the neurotoxin 01 (U2-agtx) family. Expressed by the venom gland.

Its subcellular location is the secreted. Functionally, insect active toxin causing rapid but reversible paralysis in crickets. No activity shown in mammals. Does not show effect on mammalian voltage-gated calcium channels. The polypeptide is U2-agatoxin-Ao1g (Agelena orientalis (Funnel-web spider)).